The sequence spans 101 residues: Gamma-secretase subunit PEN-2 (101 aa).

Residues 1-17 lie on the Cytoplasmic side of the membrane; the sequence is MNLERVSNEEKLNLCRK. An intramembrane region (helical) is located at residues 18–36; that stretch reads YYLGGFAFLPFLWLVNIFW. Residues 37–57 lie on the Cytoplasmic side of the membrane; sequence FFKEAFFAPAYTEQSQIKGYV. A helical membrane pass occupies residues 58 to 78; that stretch reads WRSAVGFLFWVIVLTTWITIF. The Lumenal portion of the chain corresponds to 79–101; the sequence is QIYRPRWGALGDYLSFTIPLGTP.

Belongs to the PEN-2 family. The functional gamma-secretase complex is composed of at least four polypeptides: a presenilin homodimer (PSEN1 or PSEN2), nicastrin (NCSTN), APH1 (APH1A or APH1B) and PSENEN.

The protein resides in the endoplasmic reticulum membrane. It is found in the golgi apparatus. The protein localises to the golgi stack membrane. Its subcellular location is the cell membrane. It localises to the membrane. Functionally, essential subunit of the gamma-secretase complex, an endoprotease complex that catalyzes the intramembrane cleavage of integral membrane proteins such as Notch receptors and APP (amyloid-beta precursor protein). The gamma-secretase complex plays a role in Notch and Wnt signaling cascades and regulation of downstream processes via its role in processing key regulatory proteins, and by regulating cytosolic CTNNB1 levels. PSENEN modulates both endoproteolysis of presenilin and gamma-secretase activity. The sequence is that of Gamma-secretase subunit PEN-2 (Psenen) from Rattus norvegicus (Rat).